Reading from the N-terminus, the 434-residue chain is Cytochrome P450 144 (434 aa).

Substrate is bound by residues Asp124 and His128. 4 residues coordinate heme: Arg132, Arg326, His383, and Cys385.

The protein belongs to the cytochrome P450 family. As to quaternary structure, monomer. It depends on heme as a cofactor.

This Mycobacterium tuberculosis (strain CDC 1551 / Oshkosh) protein is Cytochrome P450 144 (cyp144).